The primary structure comprises 227 residues: Myogenin (227 aa).

In terms of domain architecture, bHLH spans 82-133 (DRRRAATLREKRRLKKVNEAFEALKRSTLLNPNQRLPKVEILRSAIQYIERL). A disordered region spans residues 147–196 (QRELRYRPAAPQPAAPSECGSGSSSCSPEWSTQLEFGTNPADHLLSDDQA). The span at 161-175 (APSECGSGSSSCSPE) shows a compositional bias: low complexity.

As to quaternary structure, homodimer and heterodimer. Efficient DNA binding requires dimerization with another bHLH protein.

Its subcellular location is the nucleus. Its function is as follows. Acts as a transcriptional activator that promotes transcription of muscle-specific target genes and plays a role in muscle differentiation. Induces fibroblasts to differentiate into myoblasts. Probable sequence specific DNA-binding protein. This is Myogenin (MYOG) from Gallus gallus (Chicken).